The following is a 176-amino-acid chain: MSKKDTEHDDDFALFKDAVQGVKKLRQDTIIQQPKKNTKQKEITRSNREASDSEFYFSDEFVPLLNADGPTRYARDDVSTYEVKRLRRGVYVPDVFLDMHGMTQQEAKRELGAMIAYCVKNEIHCACVQHGIGKHILKQKAPLWLAQHPDVMAFHQAPLEFGGDGALLVLLSIPEK.

The Smr domain occupies 97-172 (LDMHGMTQQE…GDGALLVLLS (76 aa)).

This sequence belongs to the SmrB family. Associates with collided ribosomes, but not with correctly translating polysomes.

Functionally, acts as a ribosome collision sensor. Detects stalled/collided disomes (pairs of ribosomes where the leading ribosome is stalled and a second ribosome has collided with it) and endonucleolytically cleaves mRNA at the 5' boundary of the stalled ribosome. Stalled/collided disomes form a new interface (primarily via the 30S subunits) that binds SmrB. Cleaved mRNA becomes available for tmRNA ligation, leading to ribosomal subunit dissociation and rescue of stalled ribosomes. The sequence is that of Ribosome rescue factor SmrB from Vibrio campbellii (strain ATCC BAA-1116).